The following is a 432-amino-acid chain: Cytoplasmic 60S subunit biogenesis factor REH1 (432 aa).

Residues 6–30 (FTCNCCVIQFKTSDLQRYHMKTEWH) form a C2H2-type 1 zinc finger. The interval 79–150 (QSNALPQKQK…NTDYGEDTVS (72 aa)) is disordered. A compositionally biased stretch (basic residues) spans 86–98 (KQKKPIKSKRGRK). Residues 105–117 (KRKDRDIAKEKQN) are compositionally biased toward basic and acidic residues. Positions 118 to 143 (RSVSPSGSISSQLSNLTVGTENTNTD) are enriched in polar residues. 2 C2H2-type zinc fingers span residues 186–209 (TECI…FSEH) and 237–261 (HNCL…SKRH).

Belongs to the REI1 family. In terms of assembly, associates with nascent pre-60S particles that have not yet entered the translating pool, and is released from mature 60S subunits. Interacts with pre-60S factors NMD3, LSG1, and TIF6.

The protein resides in the cytoplasm. In terms of biological role, pre-60S-associated cytoplasmic factor involved in the cytoplasmic maturation of the 60S subunit. May act redundantly with REI1 to directly promote a stabilizing structural rearrangement in cytoplasmic 60S subunit maturation independent on the REI1-specific ARX1 recycling. The sequence is that of Cytoplasmic 60S subunit biogenesis factor REH1 (REH1) from Saccharomyces cerevisiae (strain ATCC 204508 / S288c) (Baker's yeast).